Reading from the N-terminus, the 549-residue chain is Probable protein kinase UbiB (549 aa).

Residues 123–504 (DFDETALASA…QRNNTGFSRL (382 aa)) form the Protein kinase domain. ATP-binding positions include 129-137 (LASASIAQV) and K156. Residue D291 is the Proton acceptor of the active site. Residues 505–525 (MILGIAIAGTFWKFEMLPLWV) traverse the membrane as a helical segment.

It belongs to the ABC1 family. UbiB subfamily.

Its subcellular location is the cell inner membrane. The protein operates within cofactor biosynthesis; ubiquinone biosynthesis [regulation]. Functionally, is probably a protein kinase regulator of UbiI activity which is involved in aerobic coenzyme Q (ubiquinone) biosynthesis. The sequence is that of Probable protein kinase UbiB from Glaesserella parasuis serovar 5 (strain SH0165) (Haemophilus parasuis).